The primary structure comprises 96 residues: Aspartyl/glutamyl-tRNA(Asn/Gln) amidotransferase subunit C (96 aa).

The protein belongs to the GatC family. As to quaternary structure, heterotrimer of A, B and C subunits.

It carries out the reaction L-glutamyl-tRNA(Gln) + L-glutamine + ATP + H2O = L-glutaminyl-tRNA(Gln) + L-glutamate + ADP + phosphate + H(+). It catalyses the reaction L-aspartyl-tRNA(Asn) + L-glutamine + ATP + H2O = L-asparaginyl-tRNA(Asn) + L-glutamate + ADP + phosphate + 2 H(+). In terms of biological role, allows the formation of correctly charged Asn-tRNA(Asn) or Gln-tRNA(Gln) through the transamidation of misacylated Asp-tRNA(Asn) or Glu-tRNA(Gln) in organisms which lack either or both of asparaginyl-tRNA or glutaminyl-tRNA synthetases. The reaction takes place in the presence of glutamine and ATP through an activated phospho-Asp-tRNA(Asn) or phospho-Glu-tRNA(Gln). In Sulfurimonas denitrificans (strain ATCC 33889 / DSM 1251) (Thiomicrospira denitrificans (strain ATCC 33889 / DSM 1251)), this protein is Aspartyl/glutamyl-tRNA(Asn/Gln) amidotransferase subunit C.